Here is a 117-residue protein sequence, read N- to C-terminus: uncharacterized protein (117 aa).

Residues 4–26 (VLNFHFSYIYTYFITITTNYKYG) traverse the membrane as a helical segment.

Its subcellular location is the host membrane. This is an uncharacterized protein from Sulfolobus islandicus rod-shaped virus 1 (SIRV-1).